The chain runs to 316 residues: Acetyl-coenzyme A carboxylase carboxyl transferase subunit alpha (316 aa).

Residues 40–290 (KARKELQRIY…RERFAHHLQE (251 aa)) enclose the CoA carboxyltransferase C-terminal domain.

Belongs to the AccA family. Acetyl-CoA carboxylase is a heterohexamer composed of biotin carboxyl carrier protein (AccB), biotin carboxylase (AccC) and two subunits each of ACCase subunit alpha (AccA) and ACCase subunit beta (AccD).

It is found in the cytoplasm. The enzyme catalyses N(6)-carboxybiotinyl-L-lysyl-[protein] + acetyl-CoA = N(6)-biotinyl-L-lysyl-[protein] + malonyl-CoA. Its pathway is lipid metabolism; malonyl-CoA biosynthesis; malonyl-CoA from acetyl-CoA: step 1/1. Functionally, component of the acetyl coenzyme A carboxylase (ACC) complex. First, biotin carboxylase catalyzes the carboxylation of biotin on its carrier protein (BCCP) and then the CO(2) group is transferred by the carboxyltransferase to acetyl-CoA to form malonyl-CoA. This is Acetyl-coenzyme A carboxylase carboxyl transferase subunit alpha from Acidithiobacillus ferrooxidans (strain ATCC 23270 / DSM 14882 / CIP 104768 / NCIMB 8455) (Ferrobacillus ferrooxidans (strain ATCC 23270)).